The chain runs to 205 residues: Imidazoleglycerol-phosphate dehydratase (205 aa).

A disordered region spans residues 1–27 (MKQASPRAGGAKARRGQVARKTKETDV).

This sequence belongs to the imidazoleglycerol-phosphate dehydratase family.

It localises to the cytoplasm. The catalysed reaction is D-erythro-1-(imidazol-4-yl)glycerol 3-phosphate = 3-(imidazol-4-yl)-2-oxopropyl phosphate + H2O. Its pathway is amino-acid biosynthesis; L-histidine biosynthesis; L-histidine from 5-phospho-alpha-D-ribose 1-diphosphate: step 6/9. This is Imidazoleglycerol-phosphate dehydratase from Anaeromyxobacter sp. (strain Fw109-5).